A 190-amino-acid polypeptide reads, in one-letter code: dCTP deaminase (190 aa).

DCTP is bound by residues Lys111–Arg116, Thr135–Glu137, Gln156, Tyr172, and Gln182. The active-site Proton donor/acceptor is Glu137.

The protein belongs to the dCTP deaminase family. As to quaternary structure, homotrimer.

It catalyses the reaction dCTP + H2O + H(+) = dUTP + NH4(+). The protein operates within pyrimidine metabolism; dUMP biosynthesis; dUMP from dCTP (dUTP route): step 1/2. Its function is as follows. Catalyzes the deamination of dCTP to dUTP. This is dCTP deaminase from Stenotrophomonas maltophilia (strain K279a).